The chain runs to 704 residues: Elongation factor G (704 aa).

The region spanning 8-290 (EKYRNIGICA…GVVRYLPAPN (283 aa)) is the tr-type G domain. Residues 17–24 (AHVDAGKT), 88–92 (DTPGH), and 142–145 (NKMD) each bind GTP.

Belongs to the TRAFAC class translation factor GTPase superfamily. Classic translation factor GTPase family. EF-G/EF-2 subfamily.

It localises to the cytoplasm. In terms of biological role, catalyzes the GTP-dependent ribosomal translocation step during translation elongation. During this step, the ribosome changes from the pre-translocational (PRE) to the post-translocational (POST) state as the newly formed A-site-bound peptidyl-tRNA and P-site-bound deacylated tRNA move to the P and E sites, respectively. Catalyzes the coordinated movement of the two tRNA molecules, the mRNA and conformational changes in the ribosome. This is Elongation factor G from Francisella tularensis subsp. holarctica (strain FTNF002-00 / FTA).